A 354-amino-acid polypeptide reads, in one-letter code: Caffeic acid 3-O-methyltransferase (354 aa).

Met-121–Leu-127 contacts substrate. The interval Ala-153–Met-171 is substrate binding. S-adenosyl-L-methionine is bound by residues Gly-199, Asp-222, Asp-242, Met-243, and Lys-256. Catalysis depends on His-260, which acts as the Proton acceptor.

It belongs to the class I-like SAM-binding methyltransferase superfamily. Cation-independent O-methyltransferase family. COMT subfamily. Homodimer.

It catalyses the reaction (E)-caffeate + S-adenosyl-L-methionine = (E)-ferulate + S-adenosyl-L-homocysteine + H(+). It participates in aromatic compound metabolism; phenylpropanoid biosynthesis. Catalyzes the conversion of caffeic acid to ferulic acid and of 5-hydroxyferulic acid to sinapic acid. The resulting products may subsequently be converted to the corresponding alcohols that are incorporated into lignins. The sequence is that of Caffeic acid 3-O-methyltransferase from Zinnia elegans (Garden zinnia).